A 489-amino-acid chain; its full sequence is Rhamnulokinase (489 aa).

13 to 17 (ASSGR) provides a ligand contact to ATP. Cys-68 and Cys-222 form a disulfide bridge. Substrate-binding positions include Gly-83 and 236–238 (HDT). Asp-237 serves as the catalytic Proton acceptor. Thr-259 provides a ligand contact to ATP. Asn-296 is a substrate binding site. Gln-304 provides a ligand contact to ATP. A disulfide bridge connects residues Cys-353 and Cys-370. Residue Gly-402 participates in ATP binding. A disulfide bond links Cys-413 and Cys-417.

Belongs to the rhamnulokinase family. In terms of assembly, monomer. Mg(2+) serves as cofactor.

The enzyme catalyses L-rhamnulose + ATP = L-rhamnulose 1-phosphate + ADP + H(+). It participates in carbohydrate degradation; L-rhamnose degradation; glycerone phosphate from L-rhamnose: step 2/3. Functionally, involved in the catabolism of L-rhamnose (6-deoxy-L-mannose). Catalyzes the transfer of the gamma-phosphate group from ATP to the 1-hydroxyl group of L-rhamnulose to yield L-rhamnulose 1-phosphate. This Escherichia coli O9:H4 (strain HS) protein is Rhamnulokinase.